Consider the following 99-residue polypeptide: Small ribosomal subunit protein bS16 (99 aa).

The disordered stretch occupies residues 80–99 (PPRQQNEAKRETAETAQPEA).

The protein belongs to the bacterial ribosomal protein bS16 family.

This is Small ribosomal subunit protein bS16 from Thermomicrobium roseum (strain ATCC 27502 / DSM 5159 / P-2).